A 197-amino-acid chain; its full sequence is Endo-1,4-beta-xylanase A (197 aa).

Residues 1 to 197 form the GH11 domain; that stretch reads SGTPSSTGTD…SSGTATITVT (197 aa). E87 functions as the Nucleophile in the catalytic mechanism. A disulfide bond links C111 and C160. The active-site Proton donor is the E184.

This sequence belongs to the glycosyl hydrolase 11 (cellulase G) family.

It is found in the secreted. It catalyses the reaction Endohydrolysis of (1-&gt;4)-beta-D-xylosidic linkages in xylans.. Its pathway is glycan degradation; xylan degradation. Hydrolyzes xylans into xylobiose and xylose. This Schizophyllum commune (Split gill fungus) protein is Endo-1,4-beta-xylanase A (XYNA).